Reading from the N-terminus, the 307-residue chain is HTH-type transcriptional regulator DmlR (307 aa).

Residues 5–62 (PLLNDLRVFMLVARRAGFAAVAEELGVSPAFVSKRIALLEQTLNVVLLHRTTRRVTIT) enclose the HTH lysR-type domain. A DNA-binding region (H-T-H motif) is located at residues 22-41 (FAAVAEELGVSPAFVSKRIA).

The protein belongs to the LysR transcriptional regulatory family.

Its function is as follows. Transcriptional regulator required for the aerobic growth on D-malate as the sole carbon source. Induces the expression of dmlA in response to D-malate or L- or meso-tartrate. Negatively regulates its own expression. The sequence is that of HTH-type transcriptional regulator DmlR (dmlR) from Escherichia coli (strain K12).